A 511-amino-acid polypeptide reads, in one-letter code: MRIIPRTMSTQHPDNAKVPEWAKSEVIEGEDEVKEAFLAYSMYGVHEVMWDAEGKDVDTHVVRKLLSNYPDYFREHILGKDLFLTYRLPNPKVEGADRKVFAETMESIPITYDLAEKFYGNGITIPVFEVILPMTTSSLEIISVARYYEKAVANEDELELYDGVKVKDLVGEIYPKVIEVIPLVEDRDSLQNINNIVEGYYKVIKPKYMRVFLARSDPAMNYGMITAVLSVKIALSELYKLSESLNFEIYPIIGVGSLPFRGHLSPENYEKVLEEYKGVYTYTIQSAFKYDYDYDKVKSAISSINNSRISPARILEKYEEDVLRKITILYTERYQPIIESLANAINDVSVLLPRRRARKLHIGLFGYSRSAGKVSLPRAISFVGSLYSIGIPPELIGISSLSNLDEKEWDIFKQNYVNFKHDLQTAARFLNWESFKLIKDIWKISEDTIAKIKEDIDYAESVIGIKLGGIDYDSRKHILMSSLFLLSFKEKILQESKKYLYEMALIRRSLG.

This sequence belongs to the PEPCase type 2 family. In terms of assembly, homotetramer. Requires Mg(2+) as cofactor.

It carries out the reaction oxaloacetate + phosphate = phosphoenolpyruvate + hydrogencarbonate. With respect to regulation, allosterically inhibited by L-aspartate and L-malate. PEPC activity is not affected by allosteric activators of E.coli PEPC such as glucose 6-phosphate, fructose 1,6-bisphosphate, and acetyl coenzyme A. Catalyzes the irreversible beta-carboxylation of phosphoenolpyruvate (PEP) to form oxaloacetate (OAA), a four-carbon dicarboxylic acid source for the tricarboxylic acid cycle. This chain is Phosphoenolpyruvate carboxylase, found in Saccharolobus solfataricus (strain ATCC 35092 / DSM 1617 / JCM 11322 / P2) (Sulfolobus solfataricus).